The sequence spans 66 residues: Large ribosomal subunit protein bL35 (66 aa).

Residues 1-16 (MPKQKTHRASAKRFKR) are compositionally biased toward basic residues. A disordered region spans residues 1-21 (MPKQKTHRASAKRFKRTGNGG).

Belongs to the bacterial ribosomal protein bL35 family.

This is Large ribosomal subunit protein bL35 from Lactococcus lactis subsp. cremoris (strain MG1363).